The sequence spans 301 residues: Probable alpha-L-glutamate ligase (301 aa).

The ATP-grasp domain maps to 104-287 (LQLLSRKGIG…IAGMIIEYIE (184 aa)). ATP contacts are provided by residues lysine 141, 178–179 (EY), aspartate 187, and 211–213 (RSN). Mg(2+) is bound by residues aspartate 248, glutamate 260, and asparagine 262. Residues aspartate 248, glutamate 260, and asparagine 262 each contribute to the Mn(2+) site.

The protein belongs to the RimK family. Requires Mg(2+) as cofactor. Mn(2+) is required as a cofactor.

This Methanococcoides burtonii (strain DSM 6242 / NBRC 107633 / OCM 468 / ACE-M) protein is Probable alpha-L-glutamate ligase.